A 116-amino-acid polypeptide reads, in one-letter code: Protein aq_1857 (116 aa).

The protein belongs to the HesB/IscA family.

This chain is Protein aq_1857, found in Aquifex aeolicus (strain VF5).